Here is a 776-residue protein sequence, read N- to C-terminus: MKLVIVESPAKAKTINKYLGDEFKVIASFGHIRDLPSKKGSVLPDKNFLMEYDISDKAGKYVDAIVKEARKAEVVYLATDPDREGESISWHVAEVIKEKNKVESDDFFKRVAFNEITKKAIMNAVANPRKLDTNLVNAQQARRALDYLVGFTLSPLLWRKLPGCKSAGRVQSVALRLICDREDEIERFKSEEYWDISLKMQNSNNDLFTAKLTHVNDQKLKKFSIINEKEAKDLTQKLKLQKFYVEKIEKKQQKRQPQPPFITSSLQQEAARKLGFSAKKTMQIAQKLYEGVDIGKETIGLITYMRTDGVTLSNDAIADIRKLIDKNYGNQYLPIKPRIYQSKVKNAQEAHEAIRPTNITYTPDSLKQKLEKDYYKLYELIWHRTIACQMENVIMDLVIANLASENKEYLAKANGSIIAFDGFYKVYRESLDDEDEEDNKMLPPLKEQEHIKTKEVIPNKHFTEPPPRYSEASLVKKLEELGIGRPSTYASILSVLQDRKYVALEKKRFIPEELGRLVTVFLVGFFKKYVEYDFTAGLENELDEIAAGKLEWKTALNNFWRGFNHNIESVNEQKITEIINYLQKALDYHLFGEDKESKVCPSCKTGQLSLKLGKFGAFLACSNYPECTFKKSIVSGNDNNEDEGDPSTILNDNKILGTDQDGVEIYLKKGPYGPYIQLGEQCGKVKPKRTPVPANLKQSEITLEIALKLLNLPLKIGIHKDSGEEIIIGYSKFGPYIKYMCKFISVPKKYDFLNLSLNDAMKLIQNNKAKLEKKYG.

The Toprim domain maps to 1–111; the sequence is MKLVIVESPA…VESDDFFKRV (111 aa). Positions 7 and 80 each coordinate Mg(2+). The 437-residue stretch at 132–568 folds into the Topo IA-type catalytic domain; sequence DTNLVNAQQA…FWRGFNHNIE (437 aa). Positions 166–171 are interaction with DNA; the sequence is SAGRVQ. The active-site O-(5'-phospho-DNA)-tyrosine intermediate is Tyr-304. The C4-type zinc finger occupies 600 to 627; that stretch reads CPSCKTGQLSLKLGKFGAFLACSNYPEC.

The protein belongs to the type IA topoisomerase family. Monomer. Requires Mg(2+) as cofactor.

The catalysed reaction is ATP-independent breakage of single-stranded DNA, followed by passage and rejoining.. Functionally, releases the supercoiling and torsional tension of DNA, which is introduced during the DNA replication and transcription, by transiently cleaving and rejoining one strand of the DNA duplex. Introduces a single-strand break via transesterification at a target site in duplex DNA. The scissile phosphodiester is attacked by the catalytic tyrosine of the enzyme, resulting in the formation of a DNA-(5'-phosphotyrosyl)-enzyme intermediate and the expulsion of a 3'-OH DNA strand. The free DNA strand then undergoes passage around the unbroken strand, thus removing DNA supercoils. Finally, in the religation step, the DNA 3'-OH attacks the covalent intermediate to expel the active-site tyrosine and restore the DNA phosphodiester backbone. The polypeptide is DNA topoisomerase 1 (Rickettsia prowazekii (strain Madrid E)).